Consider the following 308-residue polypeptide: Elongation factor Ts (308 aa).

Residues 80 to 83 (TDFV) form an involved in Mg(2+) ion dislocation from EF-Tu region.

Belongs to the EF-Ts family.

Its subcellular location is the cytoplasm. In terms of biological role, associates with the EF-Tu.GDP complex and induces the exchange of GDP to GTP. It remains bound to the aminoacyl-tRNA.EF-Tu.GTP complex up to the GTP hydrolysis stage on the ribosome. In Rhodopseudomonas palustris (strain ATCC BAA-98 / CGA009), this protein is Elongation factor Ts.